A 190-amino-acid chain; its full sequence is Elongation factor P (190 aa).

Belongs to the elongation factor P family.

Its subcellular location is the cytoplasm. It participates in protein biosynthesis; polypeptide chain elongation. Functionally, involved in peptide bond synthesis. Stimulates efficient translation and peptide-bond synthesis on native or reconstituted 70S ribosomes in vitro. Probably functions indirectly by altering the affinity of the ribosome for aminoacyl-tRNA, thus increasing their reactivity as acceptors for peptidyl transferase. This chain is Elongation factor P, found in Amoebophilus asiaticus (strain 5a2).